Consider the following 142-residue polypeptide: ATP synthase epsilon chain (142 aa).

This sequence belongs to the ATPase epsilon chain family. F-type ATPases have 2 components, CF(1) - the catalytic core - and CF(0) - the membrane proton channel. CF(1) has five subunits: alpha(3), beta(3), gamma(1), delta(1), epsilon(1). CF(0) has three main subunits: a, b and c.

It localises to the cell inner membrane. Produces ATP from ADP in the presence of a proton gradient across the membrane. The sequence is that of ATP synthase epsilon chain from Mannheimia succiniciproducens (strain KCTC 0769BP / MBEL55E).